A 295-amino-acid polypeptide reads, in one-letter code: 4-hydroxy-tetrahydrodipicolinate synthase (295 aa).

Threonine 47 provides a ligand contact to pyruvate. Tyrosine 135 acts as the Proton donor/acceptor in catalysis. Catalysis depends on lysine 163, which acts as the Schiff-base intermediate with substrate. Isoleucine 206 serves as a coordination point for pyruvate.

This sequence belongs to the DapA family. As to quaternary structure, homodimer.

Its subcellular location is the cytoplasm. It catalyses the reaction L-aspartate 4-semialdehyde + pyruvate = (2S,4S)-4-hydroxy-2,3,4,5-tetrahydrodipicolinate + H2O + H(+). The protein operates within amino-acid biosynthesis; L-lysine biosynthesis via DAP pathway; (S)-tetrahydrodipicolinate from L-aspartate: step 3/4. Functionally, catalyzes the condensation of (S)-aspartate-beta-semialdehyde [(S)-ASA] and pyruvate to 4-hydroxy-tetrahydrodipicolinate (HTPA). This chain is 4-hydroxy-tetrahydrodipicolinate synthase, found in Staphylococcus aureus (strain Mu50 / ATCC 700699).